Here is a 62-residue protein sequence, read N- to C-terminus: Photosystem II reaction center protein Z (62 aa).

Transmembrane regions (helical) follow at residues 8–28 (AVFALIITSSILLISVPVVFA) and 41–61 (FSGTSLWIGLVFLVGILNSLI).

This sequence belongs to the PsbZ family. As to quaternary structure, PSII is composed of 1 copy each of membrane proteins PsbA, PsbB, PsbC, PsbD, PsbE, PsbF, PsbH, PsbI, PsbJ, PsbK, PsbL, PsbM, PsbT, PsbY, PsbZ, Psb30/Ycf12, at least 3 peripheral proteins of the oxygen-evolving complex and a large number of cofactors. It forms dimeric complexes.

Its subcellular location is the plastid. It localises to the chloroplast thylakoid membrane. May control the interaction of photosystem II (PSII) cores with the light-harvesting antenna, regulates electron flow through the 2 photosystem reaction centers. PSII is a light-driven water plastoquinone oxidoreductase, using light energy to abstract electrons from H(2)O, generating a proton gradient subsequently used for ATP formation. This Arabidopsis thaliana (Mouse-ear cress) protein is Photosystem II reaction center protein Z.